Reading from the N-terminus, the 245-residue chain is TLC domain-containing protein 5 (245 aa).

6 helical membrane passes run 1-21, 38-58, 75-95, 99-119, 162-182, and 191-211; these read MALA…SLYI, LVTF…GFID, VHVL…CVYF, GALM…ALVL, FLFV…LLFC, and WFVK…MFSI. The TLC domain maps to 29 to 204; it reads HRSYEWSCRL…AGGVAMYAVS (176 aa).

The protein belongs to the TLCD5 family.

Its subcellular location is the membrane. The protein is TLC domain-containing protein 5 of Homo sapiens (Human).